A 304-amino-acid chain; its full sequence is GTP cyclohydrolase FolE2 (304 aa).

This sequence belongs to the GTP cyclohydrolase IV family.

The enzyme catalyses GTP + H2O = 7,8-dihydroneopterin 3'-triphosphate + formate + H(+). Its pathway is cofactor biosynthesis; 7,8-dihydroneopterin triphosphate biosynthesis; 7,8-dihydroneopterin triphosphate from GTP: step 1/1. Converts GTP to 7,8-dihydroneopterin triphosphate. This chain is GTP cyclohydrolase FolE2, found in Hahella chejuensis (strain KCTC 2396).